The following is an 847-amino-acid chain: B-cell receptor CD22 (847 aa).

A signal peptide spans 1-19 (MHLLGPWLLLLVLEYLAFC). Residues 20–138 (DSSKWAFEHP…MERIHLNVSE (119 aa)) enclose the Ig-like V-type domain. The Extracellular segment spans residues 20 to 687 (DSSKWAFEHP…YYSPETIGRR (668 aa)). Asparagine 67, asparagine 101, and asparagine 112 each carry an N-linked (GlcNAc...) asparagine glycan. Arginine 120 is a binding site for N-acetylneuraminate. Residues asparagine 135, asparagine 164, asparagine 231, asparagine 295, asparagine 363, asparagine 428, asparagine 445, asparagine 448, and asparagine 479 are each glycosylated (N-linked (GlcNAc...) asparagine). 6 Ig-like C2-type domains span residues 143–235 (PHIQ…DTVQ), 242–324 (PKLE…AEVF), 331–416 (PEPS…LDVQ), 419–500 (PKKV…VALN), 505–582 (PRDV…QTAS), and 593–676 (PRRL…STLN). A disulfide bond links cysteine 161 and cysteine 219. Cystine bridges form between cysteine 265–cysteine 309 and cysteine 353–cysteine 396. Intrachain disulfides connect cysteine 442–cysteine 484 and cysteine 529–cysteine 571. Residues asparagine 574 and asparagine 634 are each glycosylated (N-linked (GlcNAc...) asparagine). Cysteine 616 and cysteine 659 are joined by a disulfide. Residues 688-708 (VAVGLGSCLAILILAICGLKL) form a helical membrane-spanning segment. Over 709–847 (QRRWKRTQSQ…ENVDYVILKH (139 aa)) the chain is Cytoplasmic. 3 positions are modified to phosphoserine: serine 725, serine 726, and serine 729. 2 consecutive short sequence motifs (ITIM motif) follow at residues 760–765 (ISYTTL) and 794–799 (VTYSVL). Tyrosine 762 is modified (phosphotyrosine). Residues tyrosine 807, tyrosine 822, and tyrosine 842 each carry the phosphotyrosine modification. 2 short sequence motifs (ITIM motif) span residues 820–825 (IHYSEL) and 840–845 (VDYVIL).

Belongs to the immunoglobulin superfamily. SIGLEC (sialic acid binding Ig-like lectin) family. As to quaternary structure, predominantly monomer of isoform CD22-beta. Also found as heterodimer of isoform CD22-beta and a shorter isoform. Interacts with PTPN6/SHP-1, LYN, SYK, PIK3R1/PIK3R2 and PLCG1 upon phosphorylation. Interacts with GRB2, INPP5D and SHC1 upon phosphorylation. May form a complex with INPP5D/SHIP, GRB2 and SHC1. Post-translationally, phosphorylation of Tyr-762, Tyr-807 and Tyr-822 are involved in binding to SYK, GRB2 and SYK, respectively. Phosphorylation of Tyr-842 is involved in binding to SYK, PLCG2 and PIK3R1/PIK3R2. In terms of processing, phosphorylated on tyrosine residues by LYN.

It is found in the cell membrane. In terms of biological role, most highly expressed siglec (sialic acid-binding immunoglobulin-like lectin) on B-cells that plays a role in various aspects of B-cell biology including differentiation, antigen presentation, and trafficking to bone marrow. Binds to alpha 2,6-linked sialic acid residues of surface molecules such as CD22 itself, CD45 and IgM in a cis configuration. Can also bind to ligands on other cells as an adhesion molecule in a trans configuration. Acts as an inhibitory coreceptor on the surface of B-cells and inhibits B-cell receptor induced signaling, characterized by inhibition of the calcium mobilization and cellular activation. Mechanistically, the immunoreceptor tyrosine-based inhibitory motif domain is phosphorylated by the Src kinase LYN, which in turn leads to the recruitment of the protein tyrosine phosphatase 1/PTPN6, leading to the negative regulation of BCR signaling. If this negative signaling from is of sufficient strength, apoptosis of the B-cell can be induced. The sequence is that of B-cell receptor CD22 from Gorilla gorilla gorilla (Western lowland gorilla).